Here is a 394-residue protein sequence, read N- to C-terminus: Quinolinate synthase (394 aa).

2 residues coordinate iminosuccinate: His57 and Ser74. A [4Fe-4S] cluster-binding site is contributed by Cys121. Iminosuccinate contacts are provided by residues 153-155 (YMN) and Ser174. A [4Fe-4S] cluster-binding site is contributed by Cys250. Residues 276–278 (HPE) and Thr293 contribute to the iminosuccinate site. Cys340 provides a ligand contact to [4Fe-4S] cluster.

This sequence belongs to the quinolinate synthase family. Type 3 subfamily. [4Fe-4S] cluster is required as a cofactor.

It localises to the cytoplasm. The enzyme catalyses iminosuccinate + dihydroxyacetone phosphate = quinolinate + phosphate + 2 H2O + H(+). Its pathway is cofactor biosynthesis; NAD(+) biosynthesis; quinolinate from iminoaspartate: step 1/1. Its function is as follows. Catalyzes the condensation of iminoaspartate with dihydroxyacetone phosphate to form quinolinate. The chain is Quinolinate synthase from Nocardioides sp. (strain ATCC BAA-499 / JS614).